We begin with the raw amino-acid sequence, 193 residues long: FMN-dependent NADH:quinone oxidoreductase (193 aa).

FMN is bound by residues serine 9, 15–17 (SSS), and 137–140 (TSGG).

The protein belongs to the azoreductase type 1 family. In terms of assembly, homodimer. It depends on FMN as a cofactor.

It carries out the reaction 2 a quinone + NADH + H(+) = 2 a 1,4-benzosemiquinone + NAD(+). It catalyses the reaction N,N-dimethyl-1,4-phenylenediamine + anthranilate + 2 NAD(+) = 2-(4-dimethylaminophenyl)diazenylbenzoate + 2 NADH + 2 H(+). Its function is as follows. Quinone reductase that provides resistance to thiol-specific stress caused by electrophilic quinones. Functionally, also exhibits azoreductase activity. Catalyzes the reductive cleavage of the azo bond in aromatic azo compounds to the corresponding amines. This chain is FMN-dependent NADH:quinone oxidoreductase, found in Pelagibacter ubique (strain HTCC1062).